Reading from the N-terminus, the 373-residue chain is Protein CAF40 (373 aa).

Residues 1-91 (MFSAQKPIYG…ANATRNNPNM (91 aa)) form a disordered region. Residues 11–22 (NGAGVNMGGGGP) are compositionally biased toward gly residues. Over residues 50–88 (GGPMLMGNTPNNNNSNENGENNGNNGNNGGNDANATRNN) the composition is skewed to low complexity.

It belongs to the CNOT9 family. In terms of assembly, subunit of the 1.0 MDa CCR4-NOT core complex that contains CCR4, CAF1, NOT1, NOT2, NOT3, NOT4, NOT5, CAF40 and CAF130. In the complex interacts with NOT1. The core complex probably is part of a less characterized 1.9 MDa CCR4-NOT complex.

The protein resides in the cytoplasm. It localises to the nucleus. Its function is as follows. Acts as a component of the CCR4-NOT core complex, which in the nucleus seems to be a general transcription factor, and in the cytoplasm the major mRNA deadenylase involved in mRNA turnover. The protein is Protein CAF40 (CAF40) of Saccharomyces cerevisiae (strain ATCC 204508 / S288c) (Baker's yeast).